The sequence spans 322 residues: ATP-dependent 6-phosphofructokinase (322 aa).

ATP is bound at residue Gly-13. 23–27 (RAVVR) contacts ADP. ATP contacts are provided by residues 74 to 75 (RC) and 104 to 107 (GDGS). Asp-105 serves as a coordination point for Mg(2+). Substrate is bound at residue 127–129 (TID). The active-site Proton acceptor is Asp-129. Arg-156 is a binding site for ADP. Substrate-binding positions include Arg-164 and 171 to 173 (MGR). ADP-binding positions include 187-189 (GAE) and 215-217 (KRH). Residues Glu-224, Arg-246, and 252–255 (HIQR) contribute to the substrate site.

The protein belongs to the phosphofructokinase type A (PFKA) family. ATP-dependent PFK group I subfamily. Prokaryotic clade 'B1' sub-subfamily. As to quaternary structure, homotetramer. It depends on Mg(2+) as a cofactor.

It is found in the cytoplasm. It catalyses the reaction beta-D-fructose 6-phosphate + ATP = beta-D-fructose 1,6-bisphosphate + ADP + H(+). The protein operates within carbohydrate degradation; glycolysis; D-glyceraldehyde 3-phosphate and glycerone phosphate from D-glucose: step 3/4. Its activity is regulated as follows. Allosterically activated by ADP and other diphosphonucleosides, and allosterically inhibited by phosphoenolpyruvate. Catalyzes the phosphorylation of D-fructose 6-phosphate to fructose 1,6-bisphosphate by ATP, the first committing step of glycolysis. The chain is ATP-dependent 6-phosphofructokinase from Paenibacillus macquariensis (Bacillus macquariensis).